Consider the following 223-residue polypeptide: Ion-translocating oxidoreductase complex subunit E (223 aa).

Transmembrane regions (helical) follow at residues 17 to 37 (SLVQ…TINA), 38 to 58 (IGLG…ISIL), 68 to 88 (IPIY…LLHA), 91 to 111 (FNLY…CIVV), 124 to 144 (VISF…MFVI), 156 to 176 (FLFG…FTFI), and 181 to 201 (TIIL…VIAF).

This sequence belongs to the NqrDE/RnfAE family. As to quaternary structure, the complex is composed of six subunits: RnfA, RnfB, RnfC, RnfD, RnfE and RnfG.

It is found in the cell inner membrane. Its function is as follows. Part of a membrane-bound complex that couples electron transfer with translocation of ions across the membrane. This Buchnera aphidicola subsp. Schizaphis graminum (strain Sg) protein is Ion-translocating oxidoreductase complex subunit E.